The following is a 160-amino-acid chain: Outer membrane protein MT2024.1 (160 aa).

An N-terminal signal peptide occupies residues 1-22 (MSWSRVIAYGLLPGLALALTCG).

Its subcellular location is the cell outer membrane. The polypeptide is Outer membrane protein MT2024.1 (Mycobacterium tuberculosis (strain CDC 1551 / Oshkosh)).